Here is a 389-residue protein sequence, read N- to C-terminus: Coproporphyrin III ferrochelatase (389 aa).

Fe-coproporphyrin III-binding residues include Ser70 and Tyr139. His205 contributes to the Fe(2+) binding site. A disordered region spans residues 207–229 (IPSTDAGKSGPSGRPDSGEPWGE). Glu303 serves as a coordination point for Fe(2+).

This sequence belongs to the ferrochelatase family.

Its subcellular location is the cytoplasm. It carries out the reaction Fe-coproporphyrin III + 2 H(+) = coproporphyrin III + Fe(2+). Its pathway is porphyrin-containing compound metabolism; protoheme biosynthesis. In terms of biological role, involved in coproporphyrin-dependent heme b biosynthesis. Catalyzes the insertion of ferrous iron into coproporphyrin III to form Fe-coproporphyrin III. This Leifsonia xyli subsp. xyli (strain CTCB07) protein is Coproporphyrin III ferrochelatase.